An 890-amino-acid chain; its full sequence is ATP-dependent DNA helicase DDX11 (890 aa).

Residues 4 to 424 (KSGRFPFPFQ…KNLMYIKQIL (421 aa)) form the Helicase ATP-binding domain. Position 39-46 (39-46 (SPTGTGKS)) interacts with ATP. The segment covering 71 to 85 (LLEGQKDSDVVKEKN) has biased composition (basic and acidic residues). Disordered regions lie at residues 71-95 (LLEGQKDSDVVKEKNSNSGPPEPDW) and 176-199 (EYESDDEATPKSRLCDDDNDDDDD). [4Fe-4S] cluster contacts are provided by Cys246, Cys264, Cys294, and Cys329. The short motif at 372–375 (DEAH) is the DEAH box element.

This sequence belongs to the DEAD box helicase family. DEAH subfamily. DDX11/CHL1 sub-subfamily. [4Fe-4S] cluster is required as a cofactor.

It localises to the nucleus. The protein localises to the nucleolus. The protein resides in the cytoplasm. It is found in the cytoskeleton. Its subcellular location is the spindle pole. It localises to the midbody. The protein localises to the microtubule organizing center. The protein resides in the centrosome. It carries out the reaction Couples ATP hydrolysis with the unwinding of duplex DNA at the replication fork by translocating in the 5'-3' direction. This creates two antiparallel DNA single strands (ssDNA). The leading ssDNA polymer is the template for DNA polymerase III holoenzyme which synthesizes a continuous strand.. The enzyme catalyses ATP + H2O = ADP + phosphate + H(+). DNA-dependent ATPase and ATP-dependent DNA helicase that participates in various functions in genomic stability, including DNA replication, DNA repair and heterochromatin organization as well as in ribosomal RNA synthesis. Plays a role in DNA double-strand break (DSB) repair at the DNA replication fork during DNA replication recovery from DNA damage. Plays a role in the regulation of sister chromatid cohesion and mitotic chromosome segregation. Stimulates 5'-single-stranded DNA flap endonuclease activity of FEN1 in an ATP- and helicase-independent manner. Also plays a role in heterochromatin organization. Involved in rRNA transcription activation through binding to active hypomethylated rDNA gene loci by recruiting UBTF and the RNA polymerase Pol I transcriptional machinery. Plays a role in embryonic development. Associates with chromatin at DNA replication fork regions. Binds to single- and double-stranded DNAs. This is ATP-dependent DNA helicase DDX11 from Danio rerio (Zebrafish).